Here is a 384-residue protein sequence, read N- to C-terminus: Deoxyguanosinetriphosphate triphosphohydrolase-like protein (384 aa).

The region spanning 63–199 is the HD domain; the sequence is RLTHSLEVAT…ASLADDISYI (137 aa).

It belongs to the dGTPase family. Type 2 subfamily.

The sequence is that of Deoxyguanosinetriphosphate triphosphohydrolase-like protein from Rickettsia typhi (strain ATCC VR-144 / Wilmington).